Reading from the N-terminus, the 383-residue chain is MFASRSDLQSRLCWIILKATLYSSWFLGVFPYRFDSRNGQLKRSRFLLFYGLILNFFLLLKMVCSGGQKLGIPEAFARNSVLENTHYTTGMLAVFSCVVIHFLNFWGSTRVQDLANELLVLEYQQFASLNETKCPKFNSFVIQKWLSVIGLLLSYLSIAYGLPGNNFSVEMVLINSLVQFSFNCNIMHYYIGVLLIYRYLWLINGQLLEMVTNLKLDCSVDSSRIRKYLSLYRRLLELKGYMVATYEYHMTLVLTTGLASNFLAIYSWIVLDISMNINFIYLLIFPLFLLVNVWNLWLSIAASDLAENAGKSTQTVLKLFADLEVKDIELERSVNEFALLCGHCQFNFHVCGLFTINYKMGFQMIITSFLYLIYMIQFDFMNL.

Residues 1 to 11 (MFASRSDLQSR) are Cytoplasmic-facing. The helical transmembrane segment at 12–32 (LCWIILKATLYSSWFLGVFPY) threads the bilayer. Residues 33-45 (RFDSRNGQLKRSR) are Extracellular-facing. The helical transmembrane segment at 46 to 66 (FLLFYGLILNFFLLLKMVCSG) threads the bilayer. Residues 67-86 (GQKLGIPEAFARNSVLENTH) are Cytoplasmic-facing. Residues 87 to 107 (YTTGMLAVFSCVVIHFLNFWG) form a helical membrane-spanning segment. Over 108–144 (STRVQDLANELLVLEYQQFASLNETKCPKFNSFVIQK) the chain is Extracellular. Asn-130 carries N-linked (GlcNAc...) asparagine glycosylation. A helical membrane pass occupies residues 145–165 (WLSVIGLLLSYLSIAYGLPGN). Over 166–250 (NFSVEMVLIN…YMVATYEYHM (85 aa)) the chain is Cytoplasmic. A helical membrane pass occupies residues 251-271 (TLVLTTGLASNFLAIYSWIVL). Topologically, residues 272 to 279 (DISMNINF) are extracellular. A helical membrane pass occupies residues 280–300 (IYLLIFPLFLLVNVWNLWLSI). The Cytoplasmic portion of the chain corresponds to 301 to 360 (AASDLAENAGKSTQTVLKLFADLEVKDIELERSVNEFALLCGHCQFNFHVCGLFTINYKM). Residues 361 to 381 (GFQMIITSFLYLIYMIQFDFM) traverse the membrane as a helical segment. Residues 382 to 383 (NL) lie on the Extracellular side of the membrane.

The protein belongs to the insect chemoreceptor superfamily. Gustatory receptor (GR) family. Gr22e subfamily. As to expression, taste bristles in the foreleg and labial palps.

It is found in the cell membrane. In terms of biological role, probable gustatory receptor which mediates acceptance or avoidance behavior, depending on its substrates. The protein is Putative gustatory receptor 22c (Gr22c) of Drosophila melanogaster (Fruit fly).